A 279-amino-acid polypeptide reads, in one-letter code: Membrane protein insertase YidC (279 aa).

An N-terminal signal peptide occupies residues 1–22; that stretch reads MKHLKRNMALLSVAALSFILTA. A lipid anchor (N-palmitoyl cysteine) is attached at cysteine 23. The S-diacylglycerol cysteine moiety is linked to residue cysteine 23. The next 5 membrane-spanning stretches (helical) occupy residues 35–55, 59–79, 129–149, 170–190, and 210–230; these read IWDG…SKLF, YGWG…PLMI, MAGC…YAAV, PYFI…WLSM, and PLVI…YWVV. Positions 253–268 are enriched in basic and acidic residues; it reads EEKIQTEKAKRKAIEK. The tract at residues 253–279 is disordered; that stretch reads EEKIQTEKAKRKAIEKAKRRAMKSKRK. Residues 269-279 are compositionally biased toward basic residues; sequence AKRRAMKSKRK.

It belongs to the OXA1/ALB3/YidC family. Type 2 subfamily.

The protein localises to the cell membrane. Functionally, required for the insertion and/or proper folding and/or complex formation of integral membrane proteins into the membrane. Involved in integration of membrane proteins that insert both dependently and independently of the Sec translocase complex, as well as at least some lipoproteins. The polypeptide is Membrane protein insertase YidC (Pediococcus pentosaceus (strain ATCC 25745 / CCUG 21536 / LMG 10740 / 183-1w)).